The sequence spans 569 residues: Urease subunit alpha (569 aa).

Residues 131-569 (GGVDAHIHFI…VAMAQRYFLF (439 aa)) form the Urease domain. Residues His-136, His-138, and Lys-219 each coordinate Ni(2+). Lys-219 carries the N6-carboxylysine modification. His-221 is a substrate binding site. 2 residues coordinate Ni(2+): His-248 and His-274. Catalysis depends on His-322, which acts as the Proton donor. Asp-362 contacts Ni(2+).

Belongs to the metallo-dependent hydrolases superfamily. Urease alpha subunit family. As to quaternary structure, heterotrimer of UreA (gamma), UreB (beta) and UreC (alpha) subunits. Three heterotrimers associate to form the active enzyme. The cofactor is Ni cation. In terms of processing, carboxylation allows a single lysine to coordinate two nickel ions.

Its subcellular location is the cytoplasm. It carries out the reaction urea + 2 H2O + H(+) = hydrogencarbonate + 2 NH4(+). It participates in nitrogen metabolism; urea degradation; CO(2) and NH(3) from urea (urease route): step 1/1. The polypeptide is Urease subunit alpha (Geobacillus kaustophilus (strain HTA426)).